The sequence spans 722 residues: Serine/threonine-protein kinase dkf-1 (722 aa).

2 Phorbol-ester/DAG-type zinc fingers span residues 98–148 (PHVV…RNNC) and 186–236 (PHTL…ASNC). In terms of domain architecture, PH spans 279–407 (KKLEGWMMHF…QFIKESLQPP (129 aa)). The Protein kinase domain occupies 426-685 (VLSDKTLGSG…IEQCLDHGWL (260 aa)). Residues 432–440 (LGSGQFGTV) and Lys455 contribute to the ATP site. Asp551 functions as the Proton acceptor in the catalytic mechanism. Residue Thr588 is modified to Phosphothreonine.

Belongs to the protein kinase superfamily. CAMK Ser/Thr protein kinase family. PKD subfamily. The cofactor is Mg(2+). In terms of processing, prolonged phosphorylation at Thr-588 results in ubiquitination and degradation. In terms of tissue distribution, highly expressed in embryos and at lower levels through the four larval stages in adults. Present in a region bounded by the anterior and posterior bulbs of the pharynx and an area of the tail containing the lumbar, dorsorectal and pre-anal ganglia. Expressed in neurons.

It is found in the cytoplasm. The protein localises to the membrane. The enzyme catalyses L-seryl-[protein] + ATP = O-phospho-L-seryl-[protein] + ADP + H(+). It carries out the reaction L-threonyl-[protein] + ATP = O-phospho-L-threonyl-[protein] + ADP + H(+). Its activity is regulated as follows. Activated by DAG and phorbol esters. Phorbol-ester/DAG-type domain 1 binds phorbol ester with high affinity and mediates accumulation at the cell periphery. Phorbol-ester/DAG-type domain 2 binds phorbol ester with low affinity but may mediate initial contact, resulting in a conformational change allowing previously occluded domain 1 to anchor the kinase. Phosphorylation on Thr-588 is then also required for activation and may also result in a further conformational change. Its function is as follows. Converts transient diacylglycerol (DAG) signals into prolonged physiological effects, independently of PKC. Role in the regulation of growth and neuromuscular control of movement. Involved in immune response to S.aureus bacterium by activating transcription factor hlh-30 downstream of phospholipase plc-1. The chain is Serine/threonine-protein kinase dkf-1 (dkf-1) from Caenorhabditis elegans.